The chain runs to 196 residues: DnaA initiator-associating protein DiaA (196 aa).

Residues 34–196 enclose the SIS domain; the sequence is LVQSLLNGNK…DNTLFPHQAD (163 aa).

It belongs to the SIS family. DiaA subfamily. In terms of assembly, homotetramer; dimer of dimers.

Functionally, required for the timely initiation of chromosomal replication via direct interactions with the DnaA initiator protein. This is DnaA initiator-associating protein DiaA from Edwardsiella ictaluri (strain 93-146).